Consider the following 269-residue polypeptide: Ubiquinone/menaquinone biosynthesis C-methyltransferase UbiE (269 aa).

S-adenosyl-L-methionine is bound by residues T92, D113, and 141 to 142 (NA).

Belongs to the class I-like SAM-binding methyltransferase superfamily. MenG/UbiE family.

The catalysed reaction is a 2-demethylmenaquinol + S-adenosyl-L-methionine = a menaquinol + S-adenosyl-L-homocysteine + H(+). It carries out the reaction a 2-methoxy-6-(all-trans-polyprenyl)benzene-1,4-diol + S-adenosyl-L-methionine = a 5-methoxy-2-methyl-3-(all-trans-polyprenyl)benzene-1,4-diol + S-adenosyl-L-homocysteine + H(+). The protein operates within quinol/quinone metabolism; menaquinone biosynthesis; menaquinol from 1,4-dihydroxy-2-naphthoate: step 2/2. It functions in the pathway cofactor biosynthesis; ubiquinone biosynthesis. In terms of biological role, methyltransferase required for the conversion of demethylmenaquinol (DMKH2) to menaquinol (MKH2) and the conversion of 2-polyprenyl-6-methoxy-1,4-benzoquinol (DDMQH2) to 2-polyprenyl-3-methyl-6-methoxy-1,4-benzoquinol (DMQH2). This Brucella canis (strain ATCC 23365 / NCTC 10854 / RM-666) protein is Ubiquinone/menaquinone biosynthesis C-methyltransferase UbiE.